A 269-amino-acid chain; its full sequence is MNNLVRSNFQDHPFHLVSPSLWPLYTSISLLVLTSNAALAMHNFANGHYSVYLGLILVISSMSFWFRDVITEGSFLGDHTLAVQKGLNLGVILFIVSEALFFMAIFWAFFHSALTPTVELGGQWPPIGIEPINPFELPLLNTVILLSSGATVTYAHHSIIGRNREGALYGSVATVLLAIVFTGFQGVEYSVSSFTISDGAFGTCFYFGTGFHGLHVIIGTIFLLVALWRIFAYHLTDNHHLGFEAGILYWHFVDVVWLFLYISIYYWGS.

7 helical membrane passes run 13 to 33, 46 to 66, 90 to 110, 138 to 160, 167 to 187, 207 to 227, and 245 to 265; these read PFHLVSPSLWPLYTSISLLVL, NGHYSVYLGLILVISSMSFWF, GVILFIVSEALFFMAIFWAFF, PLLNTVILLSSGATVTYAHHSII, ALYGSVATVLLAIVFTGFQGV, FGTGFHGLHVIIGTIFLLVAL, and AGILYWHFVDVVWLFLYISIY.

Belongs to the cytochrome c oxidase subunit 3 family. In terms of assembly, component of the cytochrome c oxidase (complex IV, CIV), a multisubunit enzyme composed of a catalytic core of 3 subunits and several supernumerary subunits. The complex exists as a monomer or a dimer and forms supercomplexes (SCs) in the inner mitochondrial membrane with ubiquinol-cytochrome c oxidoreductase (cytochrome b-c1 complex, complex III, CIII).

The protein localises to the mitochondrion inner membrane. The enzyme catalyses 4 Fe(II)-[cytochrome c] + O2 + 8 H(+)(in) = 4 Fe(III)-[cytochrome c] + 2 H2O + 4 H(+)(out). Component of the cytochrome c oxidase, the last enzyme in the mitochondrial electron transport chain which drives oxidative phosphorylation. The respiratory chain contains 3 multisubunit complexes succinate dehydrogenase (complex II, CII), ubiquinol-cytochrome c oxidoreductase (cytochrome b-c1 complex, complex III, CIII) and cytochrome c oxidase (complex IV, CIV), that cooperate to transfer electrons derived from NADH and succinate to molecular oxygen, creating an electrochemical gradient over the inner membrane that drives transmembrane transport and the ATP synthase. Cytochrome c oxidase is the component of the respiratory chain that catalyzes the reduction of oxygen to water. Electrons originating from reduced cytochrome c in the intermembrane space (IMS) are transferred via the dinuclear copper A center (CU(A)) of subunit 2 and heme A of subunit 1 to the active site in subunit 1, a binuclear center (BNC) formed by heme A3 and copper B (CU(B)). The BNC reduces molecular oxygen to 2 water molecules using 4 electrons from cytochrome c in the IMS and 4 protons from the mitochondrial matrix. In Pyricularia grisea (Crabgrass-specific blast fungus), this protein is Cytochrome c oxidase subunit 3 (COX3).